Consider the following 785-residue polypeptide: Cullin-3 (785 aa).

Positions 715–777 (SRKHQADACI…REYLQRQADN (63 aa)) constitute a Cullin neddylation domain. Residue Lys-729 forms a Glycyl lysine isopeptide (Lys-Gly) (interchain with G-Cter in NEDD8) linkage.

It belongs to the cullin family. As to quaternary structure, probable component of multiple cullin-RING-based BC3B (BTB-CUL3-BTB) E3 ubiquitin-protein ligase complexes formed by cul-3, rbx-1 and a variable BTB domain-containing protein as adapter and substrate recognition component. Interacts with btb1, btb2, btb3, nedd8 and pip1. Neddylated; enhancing the ubiquitin-ligase activity.

It is found in the cytoplasm. It participates in protein modification; protein ubiquitination. Functionally, probable core component of multiple cullin-RING-based BC3B (BTB-CUL3-BTB) E3 ubiquitin-protein ligase complexes which mediate the ubiquitination and subsequent proteasomal degradation of target proteins. As a scaffold protein may contribute to catalysis through positioning of the substrate and the ubiquitin-conjugating enzyme. The functional specificity of the BC3B complex depends on the substrate recognition component. Involved in ubiquitin-mediated degradation of btb3. The chain is Cullin-3 (cul3) from Schizosaccharomyces pombe (strain 972 / ATCC 24843) (Fission yeast).